A 164-amino-acid chain; its full sequence is Dehydrin Rab16C (164 aa).

Over residues 42–51 (MGGHHAGAGG) the composition is skewed to gly residues. The segment at 42 to 164 (MGGHHAGAGG…KIKEKLPGQH (123 aa)) is disordered. A compositionally biased stretch (low complexity) spans 105–115 (GNNQQQQQMMG). Over residues 128–138 (GMTGAGTGTGV) the composition is skewed to gly residues. A compositionally biased stretch (basic and acidic residues) spans 147-164 (GEKKGFMDKIKEKLPGQH).

Belongs to the plant dehydrin family.

The polypeptide is Dehydrin Rab16C (RAB16C) (Oryza sativa subsp. japonica (Rice)).